A 635-amino-acid chain; its full sequence is Threonine--tRNA ligase (635 aa).

Residues Met1–Thr61 enclose the TGS domain. A catalytic region spans residues Asp242–Pro533. Zn(2+) contacts are provided by Cys333, His384, and His510.

It belongs to the class-II aminoacyl-tRNA synthetase family. In terms of assembly, homodimer. It depends on Zn(2+) as a cofactor.

The protein localises to the cytoplasm. The enzyme catalyses tRNA(Thr) + L-threonine + ATP = L-threonyl-tRNA(Thr) + AMP + diphosphate + H(+). Functionally, catalyzes the attachment of threonine to tRNA(Thr) in a two-step reaction: L-threonine is first activated by ATP to form Thr-AMP and then transferred to the acceptor end of tRNA(Thr). Also edits incorrectly charged L-seryl-tRNA(Thr). The chain is Threonine--tRNA ligase from Methylobacillus flagellatus (strain ATCC 51484 / DSM 6875 / VKM B-1610 / KT).